Here is a 112-residue protein sequence, read N- to C-terminus: Nucleoid-associated protein FTM_1023 (112 aa).

This sequence belongs to the YbaB/EbfC family. Homodimer.

The protein localises to the cytoplasm. Its subcellular location is the nucleoid. Binds to DNA and alters its conformation. May be involved in regulation of gene expression, nucleoid organization and DNA protection. This Francisella tularensis subsp. mediasiatica (strain FSC147) protein is Nucleoid-associated protein FTM_1023.